Here is a 481-residue protein sequence, read N- to C-terminus: 1-acylglycerol-3-phosphate O-acyltransferase PNPLA3 (481 aa).

Residues 1–41 lie on the Cytoplasmic side of the membrane; it reads MYDAERGWSLSFAGCGFLGFYHVGATRCLSEHAPHLLRDAR. Residues 10-179 form the PNPLA domain; it reads LSFAGCGFLG…SDNVPFIDAK (170 aa). The GXGXXG signature appears at 14-19; that stretch reads GCGFLG. Residues 42–62 traverse the membrane as a helical; Signal-anchor for type II membrane protein segment; sequence MLFGASAGALHCVGVLSGIPL. Residues 45 to 49 carry the GXSXG motif; that stretch reads GASAG. Ser47 (nucleophile) is an active-site residue. Topologically, residues 63-481 are lumenal; the sequence is EQTLQVLSDL…FPSFSLEKSL (419 aa). Asn89 carries N-linked (GlcNAc...) asparagine glycosylation. The Proton acceptor role is filled by Asp166. A DGA/G motif is present at residues 166-168; the sequence is DGG. A glycan (N-linked (GlcNAc...) asparagine) is linked at Asn280.

The protein localises to the membrane. Its subcellular location is the lipid droplet. It carries out the reaction a 1-acyl-sn-glycero-3-phosphate + an acyl-CoA = a 1,2-diacyl-sn-glycero-3-phosphate + CoA. The catalysed reaction is a triacylglycerol + H2O = a diacylglycerol + a fatty acid + H(+). It catalyses the reaction a 1-acylglycerol + a 1,3-diacylglycerol = a triacylglycerol + glycerol. The enzyme catalyses a 1-acylglycerol + a 1,2-diacylglycerol = a triacylglycerol + glycerol. It carries out the reaction 2 a 1-acylglycerol = a 1,2-diacylglycerol + glycerol. The catalysed reaction is 1-(9Z-octadecenoyl)-sn-glycero-3-phosphate + (9Z)-octadecenoyl-CoA = 1,2-di-(9Z-octadecenoyl)-sn-glycero-3-phosphate + CoA. It catalyses the reaction 1-(9Z-octadecenoyl)-sn-glycero-3-phosphate + hexadecanoyl-CoA = 1-(9Z)-octadecenoyl-2-hexadecanoyl-sn-glycero-3-phosphate + CoA. The enzyme catalyses 1-(9Z-octadecenoyl)-sn-glycero-3-phosphate + (9Z,12Z)-octadecadienoyl-CoA = 1-(9Z)-octadecenoyl-2-(9Z,12Z)-octadecadienoyl-sn-glycero-3-phosphate + CoA. It carries out the reaction 1-(9Z-octadecenoyl)-sn-glycero-3-phosphate + (5Z,8Z,11Z,14Z)-eicosatetraenoyl-CoA = 1-(9Z)-octadecenoyl-2-(5Z,8Z,11Z,14Z)-eicosatetraenoyl-sn-glycero-3-phosphate + CoA. The catalysed reaction is 2 1-(9Z-octadecenoyl)-glycerol = 1,2-di-(9Z-octadecenoyl)-glycerol + glycerol. It catalyses the reaction 1-(9Z-octadecenoyl)-glycerol + 1,2-di-(9Z-octadecenoyl)-glycerol = 1,2,3-tri-(9Z-octadecenoyl)-glycerol + glycerol. The enzyme catalyses 1-(9Z-octadecenoyl)-glycerol + 1,3-di-(9Z-octadecenoyl)-glycerol = 1,2,3-tri-(9Z-octadecenoyl)-glycerol + glycerol. It carries out the reaction 1,2,3-tri-(9Z-octadecenoyl)-glycerol + H2O = 1,3-di-(9Z-octadecenoyl)-glycerol + (9Z)-octadecenoate + H(+). The catalysed reaction is a 1,2-diacyl-sn-glycero-3-phosphocholine + H2O = a 1-acyl-sn-glycero-3-phosphocholine + a fatty acid + H(+). It participates in phospholipid metabolism. It functions in the pathway glycerolipid metabolism. Its activity is regulated as follows. The triglyceride lipase activity is inhibited by BEL ((E)-6-(bromomethylene)-3-(1-naphthalenyl)-2H-tetrahydropyran-2-one), a suicide substrate inhibitor. In terms of biological role, specifically catalyzes coenzyme A (CoA)-dependent acylation of 1-acyl-sn-glycerol 3-phosphate (2-lysophosphatidic acid/LPA) to generate phosphatidic acid (PA), an important metabolic intermediate and precursor for both triglycerides and glycerophospholipids. Does not esterify other lysophospholipids. Acyl donors are long chain (at least C16) fatty acyl-CoAs: arachidonoyl-CoA, linoleoyl-CoA, oleoyl-CoA and at a lesser extent palmitoyl-CoA. Additionally possesses low triacylglycerol lipase and CoA-independent acylglycerol transacylase activities and thus may play a role in acyl-chain remodeling of triglycerides. In vitro may express hydrolytic activity against glycerolipids triacylglycerol, diacylglycerol and monoacylglycerol, with a strong preference for oleic acid as the acyl moiety. However, the triacylglycerol hydrolase activity is controversial and may be very low. Possesses phospholipase A2 activity. The polypeptide is 1-acylglycerol-3-phosphate O-acyltransferase PNPLA3 (Homo sapiens (Human)).